Here is a 216-residue protein sequence, read N- to C-terminus: Transmembrane emp24 domain-containing protein eca (216 aa).

A signal peptide spans 1 to 20 (MRDQFISLALMLCILHSACG). Residues 21–182 (LYFHISETER…FRHTSESTNS (162 aa)) lie on the Lumenal side of the membrane. The region spanning 30-126 (RKCFIEEVPD…QLRVHLDIQV (97 aa)) is the GOLD domain. Residues 134-164 (ANVAQKEKLTELQLRIRQLLDQVEQITKEQN) are a coiled coil. Residues 183–203 (RVLWWSLAQTVVLVCMGFWQM) traverse the membrane as a helical segment. Topologically, residues 204–216 (RHLKSFFEAKKLV) are cytoplasmic. The Prevents secretion from ER signature appears at 213–216 (KKLV).

The protein belongs to the EMP24/GP25L family.

Its subcellular location is the endoplasmic reticulum membrane. Functionally, eca and bai are essential, though not redundant, for dorsoventral patterning of the embryo. Specifically required during early embryogenesis for the activity of maternal tkv, while the zygotic tkv is not affected. Involved in Golgi organization. This is Transmembrane emp24 domain-containing protein eca from Drosophila erecta (Fruit fly).